Here is a 429-residue protein sequence, read N- to C-terminus: Phosphoribosylamine--glycine ligase (429 aa).

Positions 108 to 315 (KDFLARHRIP…LVLLVEAALA (208 aa)) constitute an ATP-grasp domain. 134–195 (LHEQGAPIVI…EEFLDGEEAS (62 aa)) contacts ATP. The Mg(2+) site is built by Glu-285 and Asn-287.

This sequence belongs to the GARS family. Requires Mg(2+) as cofactor. Mn(2+) is required as a cofactor.

The catalysed reaction is 5-phospho-beta-D-ribosylamine + glycine + ATP = N(1)-(5-phospho-beta-D-ribosyl)glycinamide + ADP + phosphate + H(+). The protein operates within purine metabolism; IMP biosynthesis via de novo pathway; N(1)-(5-phospho-D-ribosyl)glycinamide from 5-phospho-alpha-D-ribose 1-diphosphate: step 2/2. This is Phosphoribosylamine--glycine ligase from Pseudomonas aeruginosa (strain ATCC 15692 / DSM 22644 / CIP 104116 / JCM 14847 / LMG 12228 / 1C / PRS 101 / PAO1).